A 59-amino-acid polypeptide reads, in one-letter code: Cytochrome c oxidase subunit 9, mitochondrial (59 aa).

The Mitochondrial matrix segment spans residues 2–8 (TIAPITG). The chain crosses the membrane as a helical span at residues 9–44 (TIKRRVIMDIVLGFSLGGVMASYWWWGFHMDKINKR). Residues 45 to 56 (EKFYAELAERKK) are Mitochondrial intermembrane-facing. Positions 57–59 (QEN) are cleaved as a propeptide — removed in mature form.

It belongs to the fungal cytochrome c oxidase subunit 7a family. As to quaternary structure, component of the cytochrome c oxidase (complex IV, CIV), a multisubunit enzyme composed of 12 subunits. The complex is composed of a catalytic core of 3 subunits COX1, COX2 and COX3, encoded in the mitochondrial DNA, and 9 supernumerary subunits COX4, COX5A (or COX5B), COX6, COX7, COX8, COX9, COX12, COX13 and COX26, which are encoded in the nuclear genome. The complex exists as a monomer or a dimer and forms supercomplexes (SCs) in the inner mitochondrial membrane with a dimer of ubiquinol-cytochrome c oxidoreductase (cytochrome b-c1 complex, complex III, CIII), resulting in 2 different assemblies (supercomplexes III(2)IV and III(2)IV(2)).

The protein resides in the mitochondrion inner membrane. Its pathway is energy metabolism; oxidative phosphorylation. Component of the cytochrome c oxidase, the last enzyme in the mitochondrial electron transport chain which drives oxidative phosphorylation. The respiratory chain contains 3 multisubunit complexes succinate dehydrogenase (complex II, CII), ubiquinol-cytochrome c oxidoreductase (cytochrome b-c1 complex, complex III, CIII) and cytochrome c oxidase (complex IV, CIV), that cooperate to transfer electrons derived from NADH and succinate to molecular oxygen, creating an electrochemical gradient over the inner membrane that drives transmembrane transport and the ATP synthase. Cytochrome c oxidase is the component of the respiratory chain that catalyzes the reduction of oxygen to water. Electrons originating from reduced cytochrome c in the intermembrane space (IMS) are transferred via the dinuclear copper A center (CU(A)) of COX2 and heme A of COX1 to the active site in COX1, a binuclear center (BNC) formed by heme A3 and copper B (CU(B)). The BNC reduces molecular oxygen to 2 water molecules using 4 electrons from cytochrome c in the IMS and 4 protons from the mitochondrial matrix. The chain is Cytochrome c oxidase subunit 9, mitochondrial (COX9) from Saccharomyces cerevisiae (strain ATCC 204508 / S288c) (Baker's yeast).